The sequence spans 1051 residues: Integrin alpha-3 (1051 aa).

The N-terminal stretch at 1-32 (MGPGPRCAPGDPGWMLGALALMVAASGRFAFA) is a signal peptide. At 33–991 (FNLDTRFLVV…LVEELPAEIE (959 aa)) the chain is on the extracellular side. FG-GAP repeat units follow at residues 38-103 (RFLV…KDDC), 110-171 (EKSD…DLQL), 185-235 (CNSN…WDLS), 236-292 (EYSY…GGDL), 293-354 (KRKQ…TSFP), 356-411 (QPSL…GLLR), and 415-477 (QIVH…VARP). The N-linked (GlcNAc...) asparagine glycan is linked to Asn-86. 3 disulfides stabilise this stretch: Cys-94–Cys-103, Cys-140–Cys-162, and Cys-185–Cys-197. Positions 315, 317, 319, 323, 378, 380, 382, 386, 439, 441, 443, 445, and 447 each coordinate Ca(2+). Intrachain disulfides connect Cys-485-Cys-490 and Cys-496-Cys-550. Residues Asn-500, Asn-511, Asn-573, and Asn-605 are each glycosylated (N-linked (GlcNAc...) asparagine). A disulfide bridge connects residues Cys-615 and Cys-621. Residues Asn-656, Asn-697, and Asn-841 are each glycosylated (N-linked (GlcNAc...) asparagine). Cys-694 and Cys-702 are joined by a disulfide. Cystine bridges form between Cys-846/Cys-904 and Cys-911/Cys-916. The segment at 860-888 (LSDPGDKPHSPQRRRRQLDPGGDQGSPPV) is disordered. Asn-923, Asn-926, Asn-935, and Asn-969 each carry an N-linked (GlcNAc...) asparagine glycan. The chain crosses the membrane as a helical span at residues 992–1019 (LWLVLVAVSAGLLLLGLIIILLWKCGFF). Residues 1017 to 1021 (GFFKR) carry the GFFKR motif motif. The Cytoplasmic segment spans residues 1020-1051 (KRARTRALYEAKRQKAEMKSQPSETERLTDDY).

It belongs to the integrin alpha chain family. As to quaternary structure, heterodimer of an alpha and a beta subunit. The alpha subunit is composed of a heavy and a light chain linked by a disulfide bond. Alpha-3 associates with beta-1. Interacts with HPS5. Interacts with FAP (seprase); the interaction occurs at the cell surface of invadopodia membrane in a collagen-dependent manner. Isoform 1, but not isoform 2, is phosphorylated on serine residues.

It localises to the cell membrane. It is found in the cell projection. The protein resides in the invadopodium membrane. The protein localises to the filopodium membrane. Integrin alpha-3/beta-1 is a receptor for fibronectin, laminin, collagen, epiligrin, thrombospondin and CSPG4. Integrin alpha-3/beta-1 provides a docking site for FAP (seprase) at invadopodia plasma membranes in a collagen-dependent manner and hence may participate in the adhesion, formation of invadopodia and matrix degradation processes, promoting cell invasion. Alpha-3/beta-1 may mediate with LGALS3 the stimulation by CSPG4 of endothelial cells migration. The protein is Integrin alpha-3 (ITGA3) of Cricetulus griseus (Chinese hamster).